The chain runs to 266 residues: MRSLAVVVAVVATVAMAIGTARGSVSSIVSRAQFDRMLLHRNDGACQAKGFYTYDAFVAAAAAFPGFGTTGSADAQKREVAAFLAQTSHETTGGWATAPDGAFAWGYCFKQERGASSDYCTPSAQWPCAPGKRYYGRGPIQLSHNYNYGPAGRAIGVDLLANPDLVATDATVGFKTAIWFWMTAQPPKPSSHAVIAGQWSPSGADRAAGRVPGFGVITNIINGGIECGHGQDSRVADRIGFYKRYCDILGVGYGNNLDCYSQRPFA.

A signal peptide spans 1 to 23; the sequence is MRSLAVVVAVVATVAMAIGTARG. Intrachain disulfides connect cysteine 46–cysteine 108, cysteine 120–cysteine 128, and cysteine 227–cysteine 259. The active-site Proton donor is the glutamate 90.

The protein belongs to the glycosyl hydrolase 19 family. Chitinase class II subfamily.

It carries out the reaction Random endo-hydrolysis of N-acetyl-beta-D-glucosaminide (1-&gt;4)-beta-linkages in chitin and chitodextrins.. Its function is as follows. Defense against chitin-containing fungal pathogens. This is 26 kDa endochitinase 2 from Hordeum vulgare (Barley).